The primary structure comprises 361 residues: DNA polymerase subunit gamma-2, mitochondrial (361 aa).

Residues 1-18 (MSRIQRCFKSLASAGFFR) constitute a mitochondrion transit peptide.

Component of the DNA polymerase gamma complex consisting of two subunits: the catalytic subunit DNApol-gamma/DNApolG1 and the accessory subunit PolG2/DNApol-gamma35. In terms of tissue distribution, expressed in ovaries (at protein level).

It localises to the mitochondrion. Functionally, as accessory component of the DNA polymerase gamma complex is involved in the replication of mitochondrial DNA. Does not bind DNA. Essential for mitochondrial DNA maintenance and larval development. In Drosophila melanogaster (Fruit fly), this protein is DNA polymerase subunit gamma-2, mitochondrial.